The chain runs to 326 residues: 5-dehydro-2-deoxygluconokinase (326 aa).

The protein belongs to the carbohydrate kinase PfkB family.

The enzyme catalyses 5-dehydro-2-deoxy-D-gluconate + ATP = 6-phospho-5-dehydro-2-deoxy-D-gluconate + ADP + H(+). It participates in polyol metabolism; myo-inositol degradation into acetyl-CoA; acetyl-CoA from myo-inositol: step 5/7. Catalyzes the phosphorylation of 5-dehydro-2-deoxy-D-gluconate (2-deoxy-5-keto-D-gluconate or DKG) to 6-phospho-5-dehydro-2-deoxy-D-gluconate (DKGP). The chain is 5-dehydro-2-deoxygluconokinase from Shouchella clausii (strain KSM-K16) (Alkalihalobacillus clausii).